Here is a 157-residue protein sequence, read N- to C-terminus: Peptide methionine sulfoxide reductase MsrA (157 aa).

Residue Cys-13 is part of the active site.

Belongs to the MsrA Met sulfoxide reductase family.

The enzyme catalyses L-methionyl-[protein] + [thioredoxin]-disulfide + H2O = L-methionyl-(S)-S-oxide-[protein] + [thioredoxin]-dithiol. It catalyses the reaction [thioredoxin]-disulfide + L-methionine + H2O = L-methionine (S)-S-oxide + [thioredoxin]-dithiol. Functionally, has an important function as a repair enzyme for proteins that have been inactivated by oxidation. Catalyzes the reversible oxidation-reduction of methionine sulfoxide in proteins to methionine. The chain is Peptide methionine sulfoxide reductase MsrA from Methanococcus maripaludis (strain C7 / ATCC BAA-1331).